Consider the following 454-residue polypeptide: (Z)-3-hexen-1-ol acetyltransferase (454 aa).

Residues His174 and Asp389 each act as proton acceptor in the active site.

This sequence belongs to the plant acyltransferase family. In terms of tissue distribution, expressed in leaves and stems. Lower levels in flowers and barely detected in roots and siliques.

The catalysed reaction is (3Z)-hex-3-en-1-ol + acetyl-CoA = (3Z)-hex-3-en-1-yl acetate + CoA. With respect to regulation, inhibited by magnesium, calcium, cobalt, zinc and copper. Acyltransferase involved in the production of green leaf volatiles (GLVs). Uses acetyl-CoA as substrate, but not malonyl-CoA or benzoyl-CoA. Prefers primary, medium-chain-length, aliphatic alcohols. This Arabidopsis thaliana (Mouse-ear cress) protein is (Z)-3-hexen-1-ol acetyltransferase (CHAT).